We begin with the raw amino-acid sequence, 286 residues long: Release factor glutamine methyltransferase (286 aa).

Residues 120–124 (GTGSG), Asp143, Trp172, and Asn187 contribute to the S-adenosyl-L-methionine site. A substrate-binding site is contributed by 187–190 (NPPY).

Belongs to the protein N5-glutamine methyltransferase family. PrmC subfamily.

It catalyses the reaction L-glutaminyl-[peptide chain release factor] + S-adenosyl-L-methionine = N(5)-methyl-L-glutaminyl-[peptide chain release factor] + S-adenosyl-L-homocysteine + H(+). Functionally, methylates the class 1 translation termination release factors RF1/PrfA and RF2/PrfB on the glutamine residue of the universally conserved GGQ motif. This is Release factor glutamine methyltransferase from Gloeobacter violaceus (strain ATCC 29082 / PCC 7421).